The sequence spans 284 residues: Efem/EfeO family lipoprotein (284 aa).

The first 17 residues, 1 to 17 (MKKLTTLLLASTLLIAA), serve as a signal peptide directing secretion. A lipid anchor (N-palmitoyl cysteine) is attached at Cys18. Cys18 is lipidated: S-diacylglycerol cysteine.

The protein belongs to the EfeM/EfeO family.

The protein resides in the cell membrane. The polypeptide is Efem/EfeO family lipoprotein (Staphylococcus aureus (strain MSSA476)).